The following is an 882-amino-acid chain: Dual specificity tyrosine-phosphorylation-regulated kinase mbk-1 (882 aa).

Positions 1–42 (MNTADVPDNLQSWGQQPSSSYSNTQQHSQMTNLPPINHNNLC) are enriched in polar residues. Disordered regions lie at residues 1-45 (MNTA…CDTE), 62-81 (QKQQ…AQRF), 212-239 (KQVR…ASLT), and 255-308 (NHYQ…NGYD). A compositionally biased stretch (low complexity) spans 64-79 (QQKQQEQQHIQQQNAQ). A compositionally biased stretch (basic and acidic residues) spans 220–231 (KSQDAGKPKGSK). Residues 290 to 308 (QQQQRQKSSRGGPYNNGYD) show a composition bias toward low complexity. Residues 328–649 (ILSDTPVGKG…PYYVVRHPFL (322 aa)) form the Protein kinase domain. Residues 334–342 (VGKGSFGQV) and Lys357 contribute to the ATP site. Asp456 functions as the Proton acceptor in the catalytic mechanism. 2 disordered regions span residues 742–761 (HNPN…QYQQ) and 789–882 (QQQQ…NNKL). 2 stretches are compositionally biased toward low complexity: residues 747-761 (QYSQ…QYQQ) and 789-810 (QQQQ…QHLQ). Residues 816–827 (RQQDQNEWRNQF) are compositionally biased toward basic and acidic residues. Polar residues predominate over residues 843-869 (SVSNQISRNQFNPQQVSMTHGNVNANN).

Belongs to the protein kinase superfamily. CMGC Ser/Thr protein kinase family. MNB/DYRK subfamily. Requires Mg(2+) as cofactor. As to expression, expressed in all somatic cells.

It localises to the nucleus. It carries out the reaction L-seryl-[protein] + ATP = O-phospho-L-seryl-[protein] + ADP + H(+). It catalyses the reaction L-threonyl-[protein] + ATP = O-phospho-L-threonyl-[protein] + ADP + H(+). The catalysed reaction is L-tyrosyl-[protein] + ATP = O-phospho-L-tyrosyl-[protein] + ADP + H(+). Possible role in the function of olfactory neurons. The sequence is that of Dual specificity tyrosine-phosphorylation-regulated kinase mbk-1 from Caenorhabditis elegans.